The primary structure comprises 319 residues: Methionyl-tRNA formyltransferase (319 aa).

116–119 is a (6S)-5,6,7,8-tetrahydrofolate binding site; sequence SLLP.

It belongs to the Fmt family.

It catalyses the reaction L-methionyl-tRNA(fMet) + (6R)-10-formyltetrahydrofolate = N-formyl-L-methionyl-tRNA(fMet) + (6S)-5,6,7,8-tetrahydrofolate + H(+). Its function is as follows. Attaches a formyl group to the free amino group of methionyl-tRNA(fMet). The formyl group appears to play a dual role in the initiator identity of N-formylmethionyl-tRNA by promoting its recognition by IF2 and preventing the misappropriation of this tRNA by the elongation apparatus. The protein is Methionyl-tRNA formyltransferase of Chlorobium phaeovibrioides (strain DSM 265 / 1930) (Prosthecochloris vibrioformis (strain DSM 265)).